A 348-amino-acid chain; its full sequence is MATNQAAWLTKAGNDLEVGDAPVPTAGPGEIVVKNAAVAINPLDTHMQDVGVFVQQWPTIFGCDVAGTVHETGPDVERFKKGDRVIGHAINLVTGRPQDGAYALYTVVPANKAAILPDAISFTDGVVAPFAVEAAVCVLSLKEPGVAMPGVSTPALALPYPSLDDPVKPLGKVLVIWGGSSSVGSMTTQIATAAGIQVIAISGAHNFELSKRCGATEVFDHKDPEVVDKVVAAVQKSGQEFVGIFDAVATPDTYTSDLVILEKLGGGHLAAVHPPPAEVPSNVKAGMIFAVNDIATPVWNDFVTPALESGKIQCLPPPTIVGKGLEAINEGLKRCKAGVSATKLVVEL.

43 to 46 serves as a coordination point for NADP(+); that stretch reads LDTH. 130-137 provides a ligand contact to substrate; the sequence is FAVEAAVC. NADP(+)-binding positions include 180-183, 203-206, and 272-273; these read SSSV, GAHN, and VH. 292-296 contributes to the substrate binding site; sequence NDIAT. An NADP(+)-binding site is contributed by 339 to 340; sequence VS.

This sequence belongs to the zinc-containing alcohol dehydrogenase family. As to quaternary structure, monomer.

Its function is as follows. Dehydrogenase; part of the gene cluster that mediates the biosynthesis of orsellinic acid, as well as of the cathepsin K inhibitors F9775 A and F9775 B. The non-reducing polyketide synthase orsA produces orsellinic acid by condensing acetyl-CoA with 3 malonyl-CoA units. Further modifications by the decarboxylase orsB and the tyrosinase-like protein orsC lead to the production of F9775 A and F9775 B. The functions of orsD and orsE remain unclear since only orsB and orsC are required to convert orsellinic acid into F9775 A and F9775 B. This chain is Dehydrogenase orsE, found in Emericella nidulans (strain FGSC A4 / ATCC 38163 / CBS 112.46 / NRRL 194 / M139) (Aspergillus nidulans).